Here is a 98-residue protein sequence, read N- to C-terminus: Integration host factor subunit beta (98 aa).

The protein belongs to the bacterial histone-like protein family. Heterodimer of an alpha and a beta chain.

Functionally, this protein is one of the two subunits of integration host factor, a specific DNA-binding protein that functions in genetic recombination as well as in transcriptional and translational control. The chain is Integration host factor subunit beta from Pseudomonas putida (strain GB-1).